Here is a 332-residue protein sequence, read N- to C-terminus: Methionine import ATP-binding protein MetN (332 aa).

The ABC transporter domain maps to 2–239 (ITFQDVSKTY…PASDTARRFV (238 aa)). Position 36-43 (36-43 (GASGAGKS)) interacts with ATP.

Belongs to the ABC transporter superfamily. Methionine importer (TC 3.A.1.24) family. In terms of assembly, the complex is composed of two ATP-binding proteins (MetN), two transmembrane proteins (MetI) and a solute-binding protein (MetQ).

The protein resides in the cell inner membrane. The catalysed reaction is L-methionine(out) + ATP + H2O = L-methionine(in) + ADP + phosphate + H(+). It carries out the reaction D-methionine(out) + ATP + H2O = D-methionine(in) + ADP + phosphate + H(+). Its function is as follows. Part of the ABC transporter complex MetNIQ involved in methionine import. Responsible for energy coupling to the transport system. The polypeptide is Methionine import ATP-binding protein MetN (Caulobacter vibrioides (strain ATCC 19089 / CIP 103742 / CB 15) (Caulobacter crescentus)).